The chain runs to 286 residues: ATP synthase gamma chain (286 aa).

The protein belongs to the ATPase gamma chain family. As to quaternary structure, F-type ATPases have 2 components, CF(1) - the catalytic core - and CF(0) - the membrane proton channel. CF(1) has five subunits: alpha(3), beta(3), gamma(1), delta(1), epsilon(1). CF(0) has three main subunits: a, b and c.

The protein resides in the cell inner membrane. Produces ATP from ADP in the presence of a proton gradient across the membrane. The gamma chain is believed to be important in regulating ATPase activity and the flow of protons through the CF(0) complex. In Shewanella oneidensis (strain ATCC 700550 / JCM 31522 / CIP 106686 / LMG 19005 / NCIMB 14063 / MR-1), this protein is ATP synthase gamma chain.